The sequence spans 420 residues: UDP-N-acetylglucosamine 1-carboxyvinyltransferase (420 aa).

22-23 (KN) is a binding site for phosphoenolpyruvate. Arginine 93 contacts UDP-N-acetyl-alpha-D-glucosamine. The active-site Proton donor is the cysteine 117. Residue cysteine 117 is modified to 2-(S-cysteinyl)pyruvic acid O-phosphothioketal. 2 residues coordinate UDP-N-acetyl-alpha-D-glucosamine: aspartate 307 and isoleucine 329.

It belongs to the EPSP synthase family. MurA subfamily.

It is found in the cytoplasm. It carries out the reaction phosphoenolpyruvate + UDP-N-acetyl-alpha-D-glucosamine = UDP-N-acetyl-3-O-(1-carboxyvinyl)-alpha-D-glucosamine + phosphate. It participates in cell wall biogenesis; peptidoglycan biosynthesis. Functionally, cell wall formation. Adds enolpyruvyl to UDP-N-acetylglucosamine. The protein is UDP-N-acetylglucosamine 1-carboxyvinyltransferase of Saccharophagus degradans (strain 2-40 / ATCC 43961 / DSM 17024).